A 132-amino-acid polypeptide reads, in one-letter code: ATP synthase epsilon chain (132 aa).

The protein belongs to the ATPase epsilon chain family. In terms of assembly, F-type ATPases have 2 components, CF(1) - the catalytic core - and CF(0) - the membrane proton channel. CF(1) has five subunits: alpha(3), beta(3), gamma(1), delta(1), epsilon(1). CF(0) has three main subunits: a, b and c.

It is found in the cell inner membrane. Produces ATP from ADP in the presence of a proton gradient across the membrane. The polypeptide is ATP synthase epsilon chain (Anaeromyxobacter dehalogenans (strain 2CP-1 / ATCC BAA-258)).